A 212-amino-acid chain; its full sequence is Imidazole glycerol phosphate synthase subunit HisH (212 aa).

A Glutamine amidotransferase type-1 domain is found at Met1–Lys211. The active-site Nucleophile is Cys79. Active-site residues include His186 and Glu188.

Heterodimer of HisH and HisF.

Its subcellular location is the cytoplasm. It carries out the reaction 5-[(5-phospho-1-deoxy-D-ribulos-1-ylimino)methylamino]-1-(5-phospho-beta-D-ribosyl)imidazole-4-carboxamide + L-glutamine = D-erythro-1-(imidazol-4-yl)glycerol 3-phosphate + 5-amino-1-(5-phospho-beta-D-ribosyl)imidazole-4-carboxamide + L-glutamate + H(+). It catalyses the reaction L-glutamine + H2O = L-glutamate + NH4(+). It participates in amino-acid biosynthesis; L-histidine biosynthesis; L-histidine from 5-phospho-alpha-D-ribose 1-diphosphate: step 5/9. IGPS catalyzes the conversion of PRFAR and glutamine to IGP, AICAR and glutamate. The HisH subunit catalyzes the hydrolysis of glutamine to glutamate and ammonia as part of the synthesis of IGP and AICAR. The resulting ammonia molecule is channeled to the active site of HisF. The chain is Imidazole glycerol phosphate synthase subunit HisH from Bacillus velezensis (strain DSM 23117 / BGSC 10A6 / LMG 26770 / FZB42) (Bacillus amyloliquefaciens subsp. plantarum).